The sequence spans 119 residues: Large ribosomal subunit protein bL19 (119 aa).

Belongs to the bacterial ribosomal protein bL19 family.

Functionally, this protein is located at the 30S-50S ribosomal subunit interface and may play a role in the structure and function of the aminoacyl-tRNA binding site. The polypeptide is Large ribosomal subunit protein bL19 (Treponema denticola (strain ATCC 35405 / DSM 14222 / CIP 103919 / JCM 8153 / KCTC 15104)).